The sequence spans 160 residues: Cyclic pyranopterin monophosphate synthase (160 aa).

Substrate-binding positions include 77-79 (MCH) and 114-115 (ME). Asp129 is an active-site residue.

This sequence belongs to the MoaC family. In terms of assembly, homohexamer; trimer of dimers.

The enzyme catalyses (8S)-3',8-cyclo-7,8-dihydroguanosine 5'-triphosphate = cyclic pyranopterin phosphate + diphosphate. It participates in cofactor biosynthesis; molybdopterin biosynthesis. Its function is as follows. Catalyzes the conversion of (8S)-3',8-cyclo-7,8-dihydroguanosine 5'-triphosphate to cyclic pyranopterin monophosphate (cPMP). The protein is Cyclic pyranopterin monophosphate synthase of Listeria innocua serovar 6a (strain ATCC BAA-680 / CLIP 11262).